The chain runs to 159 residues: Transcriptional repressor NrdR (159 aa).

Polar residues predominate over residues 1–11 (MQCPTCQNTDS). A disordered region spans residues 1–21 (MQCPTCQNTDSRVLESRSADS). Residues 3–34 (CPTCQNTDSRVLESRSADSGKSVRRRRECLNC) fold into a zinc finger. The 91-residue stretch at 49–139 (VSVMKKDGSR…VYRKFNGVKD (91 aa)) folds into the ATP-cone domain.

It belongs to the NrdR family. The cofactor is Zn(2+).

Negatively regulates transcription of bacterial ribonucleotide reductase nrd genes and operons by binding to NrdR-boxes. The protein is Transcriptional repressor NrdR of Prochlorococcus marinus (strain MIT 9215).